The sequence spans 173 residues: Disulfide bond formation protein B (173 aa).

The Cytoplasmic portion of the chain corresponds to 1-14; it reads MIEFLRRIAAHRLA. The chain crosses the membrane as a helical span at residues 15–31; it reads WSLLAASALFLELSALF. Residues 32–49 lie on the Periplasmic side of the membrane; sequence FQHVLGLHPCVMCVYERI. Cysteine 41 and cysteine 44 are oxidised to a cystine. Residues 50 to 65 form a helical membrane-spanning segment; the sequence is ATLGVLTAGLLGMVAP. Topologically, residues 66-72 are cytoplasmic; it reads QKWYVRW. A helical transmembrane segment spans residues 73–90; sequence SALLLWGSSAFWGLKLAL. Residues 91–145 lie on the Periplasmic side of the membrane; the sequence is KHVDYQVNPSPFNVCEGFVDFPSWAPLDQWIPWMFYPDGDCSEVTWQFLSFSMPQ. Cysteine 105 and cysteine 131 form a disulfide bridge. Residues 146–164 traverse the membrane as a helical segment; sequence WLVAIFAVYLLVFVVVAIG. The Cytoplasmic portion of the chain corresponds to 165–173; sequence NLVKGRCCS.

Belongs to the DsbB family.

The protein resides in the cell inner membrane. In terms of biological role, required for disulfide bond formation in some periplasmic proteins. Acts by oxidizing the DsbA protein. The polypeptide is Disulfide bond formation protein B (Aeromonas hydrophila subsp. hydrophila (strain ATCC 7966 / DSM 30187 / BCRC 13018 / CCUG 14551 / JCM 1027 / KCTC 2358 / NCIMB 9240 / NCTC 8049)).